The sequence spans 572 residues: 2-isopropylmalate synthase (572 aa).

A Pyruvate carboxyltransferase domain is found at 39 to 313; sequence PVWMSTDLRD…HPGLDFSRIN (275 aa). Residues Asp48, His252, His254, and Asn288 each contribute to the Mg(2+) site. Residues 445 to 572 are regulatory domain; the sequence is VAAPYAYVEH…GVGRQVAATR (128 aa).

This sequence belongs to the alpha-IPM synthase/homocitrate synthase family. LeuA type 2 subfamily. Homodimer. The cofactor is Mg(2+).

Its subcellular location is the cytoplasm. It carries out the reaction 3-methyl-2-oxobutanoate + acetyl-CoA + H2O = (2S)-2-isopropylmalate + CoA + H(+). It functions in the pathway amino-acid biosynthesis; L-leucine biosynthesis; L-leucine from 3-methyl-2-oxobutanoate: step 1/4. Catalyzes the condensation of the acetyl group of acetyl-CoA with 3-methyl-2-oxobutanoate (2-ketoisovalerate) to form 3-carboxy-3-hydroxy-4-methylpentanoate (2-isopropylmalate). This is 2-isopropylmalate synthase from Azoarcus sp. (strain BH72).